A 349-amino-acid polypeptide reads, in one-letter code: UDP-3-O-acylglucosamine N-acyltransferase (349 aa).

Catalysis depends on H240, which acts as the Proton acceptor.

Belongs to the transferase hexapeptide repeat family. LpxD subfamily. As to quaternary structure, homotrimer.

It catalyses the reaction a UDP-3-O-[(3R)-3-hydroxyacyl]-alpha-D-glucosamine + a (3R)-hydroxyacyl-[ACP] = a UDP-2-N,3-O-bis[(3R)-3-hydroxyacyl]-alpha-D-glucosamine + holo-[ACP] + H(+). Its pathway is bacterial outer membrane biogenesis; LPS lipid A biosynthesis. In terms of biological role, catalyzes the N-acylation of UDP-3-O-acylglucosamine using 3-hydroxyacyl-ACP as the acyl donor. Is involved in the biosynthesis of lipid A, a phosphorylated glycolipid that anchors the lipopolysaccharide to the outer membrane of the cell. This chain is UDP-3-O-acylglucosamine N-acyltransferase, found in Porphyromonas gingivalis (strain ATCC BAA-308 / W83).